A 165-amino-acid polypeptide reads, in one-letter code: Phosphopantetheine adenylyltransferase (165 aa).

S10 contributes to the substrate binding site. ATP-binding positions include 10–11 (SF) and H18. K42, T79, and R93 together coordinate substrate. ATP-binding positions include 94 to 96 (GLR), E104, and 129 to 135 (VRPITAT).

Belongs to the bacterial CoaD family. As to quaternary structure, homohexamer. Requires Mg(2+) as cofactor.

The protein localises to the cytoplasm. It carries out the reaction (R)-4'-phosphopantetheine + ATP + H(+) = 3'-dephospho-CoA + diphosphate. The protein operates within cofactor biosynthesis; coenzyme A biosynthesis; CoA from (R)-pantothenate: step 4/5. Its function is as follows. Reversibly transfers an adenylyl group from ATP to 4'-phosphopantetheine, yielding dephospho-CoA (dPCoA) and pyrophosphate. The sequence is that of Phosphopantetheine adenylyltransferase from Rhodopseudomonas palustris (strain HaA2).